The sequence spans 330 residues: MRSHTGLRALVAPGYPLLLLCLLAATRPDPAEGDPTDPTFTSLPVREEMMAKYSNLSLKSCNISVTEKSNVSVEENVILEKPSHVELKCVYTATKDLNLMNVTWKKDDEPLETTGDFNTTKMGNTLTSQYRFIVFNSKQLGKYSCVFGEKELRGTFNIHVPKAHGKKKSLIAYVGDSTVLKCVCQDCLPLNWTWYMGNETAQVPIDAHSNEKYIINGSHANETRLKIKHLLEEDGGSYWCRATFQLGESEEQNELVVLSFLVPLKPFLAILAEVILLVAIILLCEVYTHKKKNDPDAGKEFEQIEQLKSDDSNGIENNVPRYRKTDSADQ.

Residues 1 to 33 (MRSHTGLRALVAPGYPLLLLCLLAATRPDPAEG) form the signal peptide. The Extracellular segment spans residues 34–254 (DPTDPTFTSL…QLGESEEQNE (221 aa)). Ig-like V-type domains lie at 38-161 (PTFT…IHVP) and 162-256 (KAHG…NELV). N-linked (GlcNAc...) asparagine glycosylation is found at asparagine 55, asparagine 62, asparagine 70, asparagine 101, asparagine 118, asparagine 191, asparagine 198, asparagine 216, and asparagine 221. Intrachain disulfides connect cysteine 89/cysteine 145 and cysteine 182/cysteine 240. A helical membrane pass occupies residues 255 to 283 (LVVLSFLVPLKPFLAILAEVILLVAIILL). Over 284-330 (CEVYTHKKKNDPDAGKEFEQIEQLKSDDSNGIENNVPRYRKTDSADQ) the chain is Cytoplasmic. Over residues 293-311 (NDPDAGKEFEQIEQLKSDD) the composition is skewed to basic and acidic residues. A disordered region spans residues 293–330 (NDPDAGKEFEQIEQLKSDDSNGIENNVPRYRKTDSADQ). A Phosphoserine modification is found at serine 312.

Interacts with SLC16A1, SLC16A6 and SLC16A7. As to expression, only member of the immunoglobulin superfamily to be expressed in embryonal carcinoma cells, which resemble multipotential cells of early embryos.

It is found in the cell membrane. Its subcellular location is the synapse. Plays a role in targeting the monocarboxylate transporters SLC16A1, SLC16A6 and SLC16A7 to the cell membrane. Plays a role in the outgrowth of motoneurons and in the formation of neuromuscular junctions. Following muscle denervation, promotes nerve terminal sprouting and the formation of additional acetylcholine receptor clusters at synaptic sites without affecting terminal Schwann cell number or morphology. Delays the retraction of terminal sprouts following re-innervation of denervated endplates. This chain is Embigin (Emb), found in Mus musculus (Mouse).